The primary structure comprises 72 residues: Crustacean hyperglycemic hormone A (72 aa).

Position 1 is a pyrrolidone carboxylic acid (glutamine 1). Residue phenylalanine 3 is modified to D-phenylalanine; in form CHHA-II. Intrachain disulfides connect cysteine 7/cysteine 43, cysteine 23/cysteine 39, and cysteine 26/cysteine 52. A Valine amide modification is found at valine 72.

Stereoinversion of L-Phe (in CHHA-I) to D-Phe (in CHHA-II).

Its subcellular location is the secreted. Its function is as follows. Hormone found in the sinus gland of isopods and decapods which controls the blood sugar level. Has a secretagogue action over the amylase released from the midgut gland. May act as a stress hormone and may be involved in the control of molting and reproduction. In Cherax destructor (Common yabby crayfish), this protein is Crustacean hyperglycemic hormone A.